The sequence spans 264 residues: Zinc import ATP-binding protein ZnuC (264 aa).

The 216-residue stretch at 11–226 (IELQNIKVVF…PTFIHLFGDQ (216 aa)) folds into the ABC transporter domain. 43–50 (GPNGGGKS) contributes to the ATP binding site.

The protein belongs to the ABC transporter superfamily. Zinc importer (TC 3.A.1.15.5) family. In terms of assembly, the complex is composed of two ATP-binding proteins (ZnuC), two transmembrane proteins (ZnuB) and a solute-binding protein (ZnuA).

The protein resides in the cell inner membrane. The enzyme catalyses Zn(2+)(out) + ATP(in) + H2O(in) = Zn(2+)(in) + ADP(in) + phosphate(in) + H(+)(in). Its function is as follows. Part of the ABC transporter complex ZnuABC involved in zinc import. Responsible for energy coupling to the transport system. In Mannheimia succiniciproducens (strain KCTC 0769BP / MBEL55E), this protein is Zinc import ATP-binding protein ZnuC.